A 126-amino-acid chain; its full sequence is C-type natriuretic peptide 1 (126 aa).

A signal peptide spans 1-22 (MLCPALLCAALLLLTPVEITDA). Positions 23–104 (RALQQPSDAA…KRAEPDRSRR (82 aa)) are excised as a propeptide. C110 and C126 form a disulfide bridge.

It belongs to the natriuretic peptide family.

Its subcellular location is the secreted. Functionally, exhibits natriuretic and vasodepressant activity. Has cGMP-stimulating activity. May help to regulate body fluid homeostasis in a variety of aquatic environments. This is C-type natriuretic peptide 1 from Takifugu rubripes (Japanese pufferfish).